A 794-amino-acid polypeptide reads, in one-letter code: Protein IQ-DOMAIN 32 (794 aa).

Positions 15-101 (CSGGDDTSAD…QSFSVDEKKS (87 aa)) are disordered. Polar residues-rich tracts occupy residues 23 to 33 (ADPNSTALENK) and 56 to 65 (SVVSETTPAS). A phosphoserine mark is found at serine 78, serine 80, serine 142, serine 193, and serine 195. Polar residues predominate over residues 80-95 (SPDNNNVSEKQQQSFS). IQ domains are found at residues 214-242 (DESVIVVIQAAVRGFLARRELLRSKKVIK) and 243-265 (LQAAVRGHLVRSQAMGSLRCVQA). Residues 230 to 241 (ARRELLRSKKVI) are calmodulin-binding. A disordered region spans residues 277 to 296 (HSTKDGSRVSATSDKSEPNA). Serine 369 carries the post-translational modification Phosphoserine. The disordered stretch occupies residues 375–417 (VNSDSTVENKTETDMPSYEASKVEGQNVELSETEKMSQYDSPE). Serine 459 bears the Phosphoserine mark. Disordered stretches follow at residues 472-555 (ELTS…RVEA) and 578-794 (ATSM…KWQR). A compositionally biased stretch (polar residues) spans 473 to 486 (LTSSTGSNKAMTLS). The span at 487-500 (SKDDVLGEEGKTDI) shows a compositional bias: basic and acidic residues. Residues serine 502 and serine 544 each carry the phosphoserine modification. 2 stretches are compositionally biased toward basic and acidic residues: residues 539-555 (TLEKKSDAEGAEPRVEA) and 585-607 (EDPKEKVENAKDEVEISATHHEP). Positions 643 to 654 (SQATPASQASSS) are enriched in low complexity. Residues 657 to 664 (ARKGKSEK) carry the Nuclear localization signal motif. Positions 768–786 (NGKQVSPRIQRSASQAQQG) are enriched in polar residues.

Belongs to the IQD family. As to quaternary structure, binds to multiple calmodulin (CaM) in the presence of Ca(2+) and CaM-like proteins.

The protein resides in the nucleus. It localises to the cytoplasm. The protein localises to the cytoskeleton. May be involved in cooperative interactions with calmodulins or calmodulin-like proteins. Recruits calmodulin proteins to microtubules, thus being a potential scaffold in cellular signaling and trafficking. May associate with nucleic acids and regulate gene expression at the transcriptional or post-transcriptional level. This chain is Protein IQ-DOMAIN 32, found in Arabidopsis thaliana (Mouse-ear cress).